The primary structure comprises 345 residues: Phosphoribosylformylglycinamidine cyclo-ligase (345 aa).

It belongs to the AIR synthase family.

The protein localises to the cytoplasm. The enzyme catalyses 2-formamido-N(1)-(5-O-phospho-beta-D-ribosyl)acetamidine + ATP = 5-amino-1-(5-phospho-beta-D-ribosyl)imidazole + ADP + phosphate + H(+). The protein operates within purine metabolism; IMP biosynthesis via de novo pathway; 5-amino-1-(5-phospho-D-ribosyl)imidazole from N(2)-formyl-N(1)-(5-phospho-D-ribosyl)glycinamide: step 2/2. The polypeptide is Phosphoribosylformylglycinamidine cyclo-ligase (Shewanella baltica (strain OS223)).